Here is a 466-residue protein sequence, read N- to C-terminus: ATP synthase subunit beta (466 aa).

155–162 (GGAGVGKT) is an ATP binding site.

This sequence belongs to the ATPase alpha/beta chains family. F-type ATPases have 2 components, CF(1) - the catalytic core - and CF(0) - the membrane proton channel. CF(1) has five subunits: alpha(3), beta(3), gamma(1), delta(1), epsilon(1). CF(0) has three main subunits: a(1), b(2) and c(9-12). The alpha and beta chains form an alternating ring which encloses part of the gamma chain. CF(1) is attached to CF(0) by a central stalk formed by the gamma and epsilon chains, while a peripheral stalk is formed by the delta and b chains.

It is found in the cell inner membrane. The catalysed reaction is ATP + H2O + 4 H(+)(in) = ADP + phosphate + 5 H(+)(out). Its function is as follows. Produces ATP from ADP in the presence of a proton gradient across the membrane. The catalytic sites are hosted primarily by the beta subunits. The chain is ATP synthase subunit beta from Bordetella petrii (strain ATCC BAA-461 / DSM 12804 / CCUG 43448).